The primary structure comprises 147 residues: Transcriptional regulator FurA (147 aa).

Positions 1–85 (MSSIPDYAEQ…GSVARYESRV (85 aa)) are DNA-binding. Zn(2+)-binding residues include H34 and E82. A dimerization region spans residues 86–147 (GDNHHHIVCR…SISDTSRSHP (62 aa)). Residues D87 and H89 each contribute to the Fe cation site. Residues H91, C94, C97, and D102 each coordinate Zn(2+). E109 contacts Fe cation.

Belongs to the Fur family. As to quaternary structure, homodimer.

It is found in the cytoplasm. Represses transcription of the catalase-peroxidase gene katG and its own transcription by binding to the promoter region in a redox-dependent manner. The chain is Transcriptional regulator FurA (furA) from Mycobacterium bovis (strain ATCC BAA-935 / AF2122/97).